The chain runs to 248 residues: Probable septum site-determining protein MinC (248 aa).

The disordered stretch occupies residues Gly-94 to Ile-126.

It belongs to the MinC family. As to quaternary structure, interacts with MinD and FtsZ.

Functionally, cell division inhibitor that blocks the formation of polar Z ring septums. Rapidly oscillates between the poles of the cell to destabilize FtsZ filaments that have formed before they mature into polar Z rings. Prevents FtsZ polymerization. The sequence is that of Probable septum site-determining protein MinC from Brucella suis biovar 1 (strain 1330).